We begin with the raw amino-acid sequence, 259 residues long: Thiazole synthase (259 aa).

Catalysis depends on lysine 95, which acts as the Schiff-base intermediate with DXP. Residues glycine 156, 182–183 (AG), and 204–205 (AS) contribute to the 1-deoxy-D-xylulose 5-phosphate site.

This sequence belongs to the ThiG family. In terms of assembly, homotetramer. Forms heterodimers with either ThiH or ThiS.

It is found in the cytoplasm. It carries out the reaction [ThiS sulfur-carrier protein]-C-terminal-Gly-aminoethanethioate + 2-iminoacetate + 1-deoxy-D-xylulose 5-phosphate = [ThiS sulfur-carrier protein]-C-terminal Gly-Gly + 2-[(2R,5Z)-2-carboxy-4-methylthiazol-5(2H)-ylidene]ethyl phosphate + 2 H2O + H(+). It functions in the pathway cofactor biosynthesis; thiamine diphosphate biosynthesis. Catalyzes the rearrangement of 1-deoxy-D-xylulose 5-phosphate (DXP) to produce the thiazole phosphate moiety of thiamine. Sulfur is provided by the thiocarboxylate moiety of the carrier protein ThiS. In vitro, sulfur can be provided by H(2)S. The polypeptide is Thiazole synthase (Corynebacterium efficiens (strain DSM 44549 / YS-314 / AJ 12310 / JCM 11189 / NBRC 100395)).